The primary structure comprises 243 residues: Phosphoribosyl isomerase A (243 aa).

Asp10 serves as the catalytic Proton acceptor. Residue Asp129 is the Proton donor of the active site.

The protein belongs to the HisA/HisF family.

Its subcellular location is the cytoplasm. The enzyme catalyses 1-(5-phospho-beta-D-ribosyl)-5-[(5-phospho-beta-D-ribosylamino)methylideneamino]imidazole-4-carboxamide = 5-[(5-phospho-1-deoxy-D-ribulos-1-ylimino)methylamino]-1-(5-phospho-beta-D-ribosyl)imidazole-4-carboxamide. It catalyses the reaction N-(5-phospho-beta-D-ribosyl)anthranilate = 1-(2-carboxyphenylamino)-1-deoxy-D-ribulose 5-phosphate. It participates in amino-acid biosynthesis; L-histidine biosynthesis; L-histidine from 5-phospho-alpha-D-ribose 1-diphosphate: step 4/9. The protein operates within amino-acid biosynthesis; L-tryptophan biosynthesis; L-tryptophan from chorismate: step 3/5. Functionally, involved in both the histidine and tryptophan biosynthetic pathways. The sequence is that of Phosphoribosyl isomerase A from Mycobacteroides abscessus (strain ATCC 19977 / DSM 44196 / CCUG 20993 / CIP 104536 / JCM 13569 / NCTC 13031 / TMC 1543 / L948) (Mycobacterium abscessus).